The sequence spans 201 residues: Small ribosomal subunit protein uS4c (201 aa).

The segment at 20–43 is disordered; sequence GLTSKRPRAGSDLRNQSRSGKRSQ. Residues 89 to 149 enclose the S4 RNA-binding domain; it reads MRLDNILFRL…NEQKSRALIQ (61 aa).

The protein belongs to the universal ribosomal protein uS4 family. Part of the 30S ribosomal subunit. Contacts protein S5. The interaction surface between S4 and S5 is involved in control of translational fidelity.

It is found in the plastid. The protein localises to the chloroplast. One of the primary rRNA binding proteins, it binds directly to 16S rRNA where it nucleates assembly of the body of the 30S subunit. In terms of biological role, with S5 and S12 plays an important role in translational accuracy. The sequence is that of Small ribosomal subunit protein uS4c (rps4) from Vitis vinifera (Grape).